The following is a 217-amino-acid chain: Formate dehydrogenase, nitrate-inducible, cytochrome b556(Fdn) subunit (217 aa).

At 1–11 (MSKSKMIVRTK) the chain is on the cytoplasmic side. Residues 12–36 (FIDRACHWTVVICFFLVALSGISFF) traverse the membrane as a helical segment. Residue His18 coordinates heme b. The Periplasmic segment spans residues 37 to 52 (FPTLQWLTQTFGTPQM). The chain crosses the membrane as a helical span at residues 53–74 (GRILHPFFGIAIFVALMFMFVR). Residue His57 coordinates heme b. Over 75–110 (FVHHNIPDKKDIPWLLNIVEVLKGNEHKVADVGKYN) the chain is Cytoplasmic. The helical transmembrane segment at 111 to 134 (AGQKMMFWSIMSMIFVLLVTGVII) threads the bilayer. Over 135–150 (WRPYFAQYFPMQVVRY) the chain is Periplasmic. A helical membrane pass occupies residues 151–175 (SLLIHAAAGIILIHAILIHMYMAFW). 2 residues coordinate heme b: His155 and His169. Residue His169 coordinates a menaquinone. Residues 176–217 (VKGSIKGMIEGKVSRRWAKKHHPRWYREIEKAEAKKESEEGI) are Cytoplasmic-facing.

Belongs to the formate dehydrogenase gamma subunit family. As to quaternary structure, trimer of heterotrimers, consisting of subunits alpha, beta and gamma. The cofactor is heme.

Its subcellular location is the cell inner membrane. Its function is as follows. Formate dehydrogenase allows the bacterium to use formate as major electron donor during anaerobic respiration, when nitrate is used as electron acceptor. Subunit gamma is the cytochrome b556 component of the formate dehydrogenase-N, and also contains a menaquinone reduction site that receives electrons from the beta subunit (FdnH), through its hemes. Formate dehydrogenase-N is part of a system that generates proton motive force, together with the dissimilatory nitrate reductase (Nar). The sequence is that of Formate dehydrogenase, nitrate-inducible, cytochrome b556(Fdn) subunit (fdnI) from Escherichia coli O157:H7.